A 320-amino-acid chain; its full sequence is D-alanine--D-alanine ligase (320 aa).

One can recognise an ATP-grasp domain in the interval 120–314 (SSWFFANSIN…FTNLIAEIIK (195 aa)). Residue 147 to 198 (MKRPYVIKPLTQGSSIGVEVIFEEDDFNFADYDFPYGDQVVIERYIKGREFQ) participates in ATP binding. The Mg(2+) site is built by Glu267, Glu281, and Asn283.

It belongs to the D-alanine--D-alanine ligase family. Mg(2+) serves as cofactor. Mn(2+) is required as a cofactor.

It localises to the cytoplasm. The enzyme catalyses 2 D-alanine + ATP = D-alanyl-D-alanine + ADP + phosphate + H(+). The protein operates within cell wall biogenesis; peptidoglycan biosynthesis. Cell wall formation. The chain is D-alanine--D-alanine ligase from Rickettsia akari (strain Hartford).